The sequence spans 102 residues: Small ribosomal subunit protein uS10 (102 aa).

This sequence belongs to the universal ribosomal protein uS10 family. Part of the 30S ribosomal subunit.

In terms of biological role, involved in the binding of tRNA to the ribosomes. The chain is Small ribosomal subunit protein uS10 from Lactococcus lactis subsp. lactis (strain IL1403) (Streptococcus lactis).